The following is a 606-amino-acid chain: Pentatricopeptide repeat-containing protein At1g31920 (606 aa).

PPR repeat units lie at residues 96–130, 131–165, 166–200, 201–227, 233–263, 268–298, 299–333, 334–368, and 370–404; these read CTFD…GNEP, DNFT…GLEA, DVFV…TAAS, WSSM…MCSE, EESG…LLRN, NIIV…MEKR, NNLT…GLEP, DHVV…GKVE, and TAEH…KNDV. The interval 405-480 is type E motif; sequence IWRTFLSQCR…TPGFSIVELK (76 aa). Residues 481–511 form a type E(+) motif region; sequence GKTHRFVSQDRSHPKCKEIYKMLHQMEWQLK. Residues 512–606 are type DYW motif; sequence FEGYSPDLTQ…GGTCSCKDYW (95 aa).

This sequence belongs to the PPR family. PCMP-H subfamily.

This is Pentatricopeptide repeat-containing protein At1g31920 (PCMP-H11) from Arabidopsis thaliana (Mouse-ear cress).